Consider the following 83-residue polypeptide: UPF0297 protein CLK_1948 (83 aa).

It belongs to the UPF0297 family.

This is UPF0297 protein CLK_1948 from Clostridium botulinum (strain Loch Maree / Type A3).